The sequence spans 263 residues: MATGGEMTSAEIIHHHMVNLTVGEGFWALHLDTLFFSILLGCSFCWLFYSIGKKAESGVPGFAQNVAEMVFDFIDNTVKGFFGESRSDIGSLALTLFCWIFFWNVMDLIPVDLLPSMAKLIGIPYLKIVPSTDPNATFALSISVVLITLVYTFRNNHGLLGMLRAMGTHPFESSGLIGKILLFPANFALRIVEDMAKIVSLSLRLFGNLFAGEIVFILITFLPFWSQWVPGGAWAIFHILVVTLQAYVFMILTIVYMSMVEKH.

A run of 5 helical transmembrane segments spans residues 31-51 (LDTL…FYSI), 89-109 (IGSL…MDLI), 133-153 (DPNA…VYTF), 205-225 (LFGN…LPFW), and 235-255 (AIFH…LTIV).

Belongs to the ATPase A chain family. F-type ATPases have 2 components, CF(1) - the catalytic core - and CF(0) - the membrane proton channel. CF(1) has five subunits: alpha(3), beta(3), gamma(1), delta(1), epsilon(1). CF(0) has three main subunits: a(1), b(2) and c(9-12). The alpha and beta chains form an alternating ring which encloses part of the gamma chain. CF(1) is attached to CF(0) by a central stalk formed by the gamma and epsilon chains, while a peripheral stalk is formed by the delta and b chains.

The protein localises to the cell inner membrane. Key component of the proton channel; it plays a direct role in the translocation of protons across the membrane. In Dichelobacter nodosus (strain VCS1703A), this protein is ATP synthase subunit a.